We begin with the raw amino-acid sequence, 130 residues long: ATP synthase epsilon chain (130 aa).

Belongs to the ATPase epsilon chain family. As to quaternary structure, F-type ATPases have 2 components, CF(1) - the catalytic core - and CF(0) - the membrane proton channel. CF(1) has five subunits: alpha(3), beta(3), gamma(1), delta(1), epsilon(1). CF(0) has three main subunits: a, b and c.

The protein resides in the cell inner membrane. Produces ATP from ADP in the presence of a proton gradient across the membrane. The polypeptide is ATP synthase epsilon chain (atpC) (Fuscovulum blasticum (Rhodobacter blasticus)).